The following is a 338-amino-acid chain: Taste receptor type 2 member 39 (338 aa).

At M1–S30 the chain is on the extracellular side. A helical membrane pass occupies residues P31–A51. Over N52–R74 the chain is Cytoplasmic. The chain crosses the membrane as a helical span at residues I75 to T95. Residues I96–S116 are Extracellular-facing. The helical transmembrane segment at F117–V137 threads the bilayer. Topologically, residues K138 to G156 are cytoplasmic. The chain crosses the membrane as a helical span at residues L157–I177. Residues N178 to N205 lie on the Extracellular side of the membrane. 2 N-linked (GlcNAc...) asparagine glycosylation sites follow: N185 and N194. Residues V206–L226 form a helical membrane-spanning segment. The Cytoplasmic portion of the chain corresponds to T227–K262. The helical transmembrane segment at A263 to S283 threads the bilayer. The Extracellular segment spans residues N284–L291. Residues W292–I312 traverse the membrane as a helical segment. Residues Q313–L338 lie on the Cytoplasmic side of the membrane.

This sequence belongs to the G-protein coupled receptor T2R family.

The protein localises to the membrane. Its function is as follows. Receptor that may play a role in the perception of bitterness and is gustducin-linked. May play a role in sensing the chemical composition of the gastrointestinal content. The activity of this receptor may stimulate alpha gustducin, mediate PLC-beta-2 activation and lead to the gating of TRPM5. The chain is Taste receptor type 2 member 39 (TAS2R39) from Pan paniscus (Pygmy chimpanzee).